We begin with the raw amino-acid sequence, 233 residues long: EEF1A lysine methyltransferase 2 (233 aa).

It belongs to the class I-like SAM-binding methyltransferase superfamily. EFM4 family.

It localises to the cytoplasm. It is found in the nucleus. It catalyses the reaction L-lysyl-[protein] + 3 S-adenosyl-L-methionine = N(6),N(6),N(6)-trimethyl-L-lysyl-[protein] + 3 S-adenosyl-L-homocysteine + 3 H(+). Protein-lysine methyltransferase that selectively catalyzes the trimethylation of EEF1A at 'Lys-318'. The polypeptide is EEF1A lysine methyltransferase 2 (Danio rerio (Zebrafish)).